The following is a 248-amino-acid chain: tRNA uridine(34) hydroxylase (248 aa).

A Rhodanese domain is found at 127–221; that stretch reads RGRPLVLLDT…YFEEVGGEGY (95 aa). Residue cysteine 181 is the Cysteine persulfide intermediate of the active site.

Belongs to the TrhO family.

The catalysed reaction is uridine(34) in tRNA + AH2 + O2 = 5-hydroxyuridine(34) in tRNA + A + H2O. Functionally, catalyzes oxygen-dependent 5-hydroxyuridine (ho5U) modification at position 34 in tRNAs. The chain is tRNA uridine(34) hydroxylase from Xanthomonas axonopodis pv. citri (strain 306).